Reading from the N-terminus, the 453-residue chain is Bifunctional protein GlmU (453 aa).

The interval 1 to 225 (MNIVILAAGT…DWETLGVNSK (225 aa)) is pyrophosphorylase. Residues 6–9 (LAAG), lysine 20, glutamine 71, 76–77 (GT), 98–100 (YGD), glycine 135, glutamate 150, asparagine 165, and asparagine 223 contribute to the UDP-N-acetyl-alpha-D-glucosamine site. Aspartate 100 contributes to the Mg(2+) binding site. Residue asparagine 223 coordinates Mg(2+). The segment at 226–246 (AQLAELERIHQRNVADALLVE) is linker. The N-acetyltransferase stretch occupies residues 247–453 (GVTLADPARV…GYVRPVKKKS (207 aa)). Residues arginine 329 and lysine 347 each contribute to the UDP-N-acetyl-alpha-D-glucosamine site. Histidine 359 serves as the catalytic Proton acceptor. The UDP-N-acetyl-alpha-D-glucosamine site is built by tyrosine 362 and asparagine 373. Residues alanine 376, 382 to 383 (NY), serine 401, and alanine 419 contribute to the acetyl-CoA site.

It in the N-terminal section; belongs to the N-acetylglucosamine-1-phosphate uridyltransferase family. The protein in the C-terminal section; belongs to the transferase hexapeptide repeat family. In terms of assembly, homotrimer. Requires Mg(2+) as cofactor.

Its subcellular location is the cytoplasm. The catalysed reaction is alpha-D-glucosamine 1-phosphate + acetyl-CoA = N-acetyl-alpha-D-glucosamine 1-phosphate + CoA + H(+). It carries out the reaction N-acetyl-alpha-D-glucosamine 1-phosphate + UTP + H(+) = UDP-N-acetyl-alpha-D-glucosamine + diphosphate. It functions in the pathway nucleotide-sugar biosynthesis; UDP-N-acetyl-alpha-D-glucosamine biosynthesis; N-acetyl-alpha-D-glucosamine 1-phosphate from alpha-D-glucosamine 6-phosphate (route II): step 2/2. Its pathway is nucleotide-sugar biosynthesis; UDP-N-acetyl-alpha-D-glucosamine biosynthesis; UDP-N-acetyl-alpha-D-glucosamine from N-acetyl-alpha-D-glucosamine 1-phosphate: step 1/1. It participates in bacterial outer membrane biogenesis; LPS lipid A biosynthesis. In terms of biological role, catalyzes the last two sequential reactions in the de novo biosynthetic pathway for UDP-N-acetylglucosamine (UDP-GlcNAc). The C-terminal domain catalyzes the transfer of acetyl group from acetyl coenzyme A to glucosamine-1-phosphate (GlcN-1-P) to produce N-acetylglucosamine-1-phosphate (GlcNAc-1-P), which is converted into UDP-GlcNAc by the transfer of uridine 5-monophosphate (from uridine 5-triphosphate), a reaction catalyzed by the N-terminal domain. The protein is Bifunctional protein GlmU of Burkholderia vietnamiensis (strain G4 / LMG 22486) (Burkholderia cepacia (strain R1808)).